The sequence spans 70 residues: Putative defensin-like protein 280 (70 aa).

Residues 1 to 23 (MASIKHFFLVFICVSVLLTSGLA) form the signal peptide. 3 disulfide bridges follow: C30-C53, C39-C65, and C43-C67.

This sequence belongs to the DEFL family.

Its subcellular location is the secreted. This Arabidopsis thaliana (Mouse-ear cress) protein is Putative defensin-like protein 280.